A 439-amino-acid polypeptide reads, in one-letter code: Agnestins biosynthesis cluster transcriptional coactivator AgnL9 (439 aa).

In terms of domain architecture, HTH iclR-type spans 79 to 149; that stretch reads MTIQTQLLAC…EPGHITHSAL (71 aa). Residues 109 to 128 constitute a DNA-binding region (H-T-H motif); the sequence is MKDVSELIDVPENQLGRIVR.

It localises to the nucleus. Functionally, transcriptional coactivator; part of the gene cluster that mediates the biosynthesis of agnestins, dihydroxy-xanthone metabolites. The polypeptide is Agnestins biosynthesis cluster transcriptional coactivator AgnL9 (Paecilomyces divaricatus (Penicillium divaricatum)).